The chain runs to 440 residues: T-box transcription factor TBX20 (440 aa).

The T-box DNA-binding region spans 103-282 (LWDKFHDLGT…SNPFAKGFRD (180 aa)).

The protein resides in the nucleus. Transcriptional regulator that may be involved in heart developmental processes. The polypeptide is T-box transcription factor TBX20 (tbx20) (Xenopus tropicalis (Western clawed frog)).